Reading from the N-terminus, the 66-residue chain is Large ribosomal subunit protein bL28 (66 aa).

The interval 1 to 26 (MAKDAITGARTRFGNQRSHALNSSRR) is disordered. The span at 13–25 (FGNQRSHALNSSR) shows a compositional bias: polar residues.

Belongs to the bacterial ribosomal protein bL28 family.

In Leuconostoc mesenteroides subsp. mesenteroides (strain ATCC 8293 / DSM 20343 / BCRC 11652 / CCM 1803 / JCM 6124 / NCDO 523 / NBRC 100496 / NCIMB 8023 / NCTC 12954 / NRRL B-1118 / 37Y), this protein is Large ribosomal subunit protein bL28.